The following is a 214-amino-acid chain: 3,4-dihydroxy-2-butanone 4-phosphate synthase (214 aa).

Residues 37 to 38 (RE), Asp-42, 150 to 154 (RRGHT), and Glu-174 each bind D-ribulose 5-phosphate. Glu-38 serves as a coordination point for Mg(2+). His-153 provides a ligand contact to Mg(2+).

The protein belongs to the DHBP synthase family. In terms of assembly, homodimer. The cofactor is Mg(2+). Mn(2+) is required as a cofactor.

It catalyses the reaction D-ribulose 5-phosphate = (2S)-2-hydroxy-3-oxobutyl phosphate + formate + H(+). The protein operates within cofactor biosynthesis; riboflavin biosynthesis; 2-hydroxy-3-oxobutyl phosphate from D-ribulose 5-phosphate: step 1/1. Its function is as follows. Catalyzes the conversion of D-ribulose 5-phosphate to formate and 3,4-dihydroxy-2-butanone 4-phosphate. This is 3,4-dihydroxy-2-butanone 4-phosphate synthase from Histophilus somni (strain 2336) (Haemophilus somnus).